Reading from the N-terminus, the 353-residue chain is Uroporphyrinogen decarboxylase (353 aa).

Substrate is bound by residues 30 to 34 (RQAGR), Asp-79, Tyr-154, Ser-209, and His-332.

The protein belongs to the uroporphyrinogen decarboxylase family. Homodimer.

Its subcellular location is the cytoplasm. It carries out the reaction uroporphyrinogen III + 4 H(+) = coproporphyrinogen III + 4 CO2. Its pathway is porphyrin-containing compound metabolism; protoporphyrin-IX biosynthesis; coproporphyrinogen-III from 5-aminolevulinate: step 4/4. Its function is as follows. Catalyzes the decarboxylation of four acetate groups of uroporphyrinogen-III to yield coproporphyrinogen-III. The polypeptide is Uroporphyrinogen decarboxylase (Mycobacterium marinum (strain ATCC BAA-535 / M)).